Consider the following 231-residue polypeptide: Large ribosomal subunit protein uL1 (231 aa).

The protein belongs to the universal ribosomal protein uL1 family. As to quaternary structure, part of the 50S ribosomal subunit.

In terms of biological role, binds directly to 23S rRNA. The L1 stalk is quite mobile in the ribosome, and is involved in E site tRNA release. Protein L1 is also a translational repressor protein, it controls the translation of the L11 operon by binding to its mRNA. In Agrobacterium fabrum (strain C58 / ATCC 33970) (Agrobacterium tumefaciens (strain C58)), this protein is Large ribosomal subunit protein uL1.